A 376-amino-acid chain; its full sequence is Methionine import ATP-binding protein MetN 2 (376 aa).

In terms of domain architecture, ABC transporter spans 34–273 (VRFINLGKTY…PQHDVSKTLL (240 aa)). 70–77 (GRSGAGKS) provides a ligand contact to ATP.

The protein belongs to the ABC transporter superfamily. Methionine importer (TC 3.A.1.24) family. The complex is composed of two ATP-binding proteins (MetN), two transmembrane proteins (MetI) and a solute-binding protein (MetQ).

It localises to the cell inner membrane. The catalysed reaction is L-methionine(out) + ATP + H2O = L-methionine(in) + ADP + phosphate + H(+). It catalyses the reaction D-methionine(out) + ATP + H2O = D-methionine(in) + ADP + phosphate + H(+). Functionally, part of the ABC transporter complex MetNIQ involved in methionine import. Responsible for energy coupling to the transport system. The protein is Methionine import ATP-binding protein MetN 2 of Pseudomonas savastanoi pv. phaseolicola (strain 1448A / Race 6) (Pseudomonas syringae pv. phaseolicola (strain 1448A / Race 6)).